A 293-amino-acid chain; its full sequence is Homoserine kinase (293 aa).

An ATP-binding site is contributed by 80–90 (RPASGLGSSAA).

It belongs to the GHMP kinase family. Homoserine kinase subfamily.

The protein resides in the cytoplasm. The catalysed reaction is L-homoserine + ATP = O-phospho-L-homoserine + ADP + H(+). It functions in the pathway amino-acid biosynthesis; L-threonine biosynthesis; L-threonine from L-aspartate: step 4/5. Its function is as follows. Catalyzes the ATP-dependent phosphorylation of L-homoserine to L-homoserine phosphate. The protein is Homoserine kinase of Halorubrum lacusprofundi (strain ATCC 49239 / DSM 5036 / JCM 8891 / ACAM 34).